Consider the following 360-residue polypeptide: WD repeat domain phosphoinositide-interacting protein 4 (360 aa).

7 WD repeats span residues 1–34 (MTQQPLRGVTSLRFNQDQSCFCCAMETGVRIYNV), 40–84 (KGHL…IWDD), 92–128 (KEKLVLEFTFTKPVLSVRMRHDKIVIVLKNRIYVYSF), 133–174 (RKLF…LVDL), 183–222 (SAPFTINAHQSDIACVSLNQPGTVVASASQKGTLIRLFDT), 227–266 (KLVELRRGTDPATLYCINFSHDSSFLCASSDKGTVHIFAL), and 284–329 (GPMI…ICVD). The short motif at 231–234 (LRRG) is the L/FRRG motif element.

This sequence belongs to the WD repeat PROPPIN family. As to quaternary structure, interacts with WIPI1. Interacts with WIPI2. Interacts with ATG2A and ATG2B. Interacts with ULK1. May interact with the PRKAA1, PRKAA2, PRKAB1 and PRKAG1 subunits of the AMPK kinase. May interact with NUDC. As to expression, ubiquitously expressed, with high expression in skeletal muscle and heart. Weakly expressed in liver and placenta. Expression is down-regulated in pancreatic and in kidney tumors.

It is found in the preautophagosomal structure. The protein resides in the cytoplasm. Activated upon amino-acid starvation. In terms of biological role, component of the autophagy machinery that controls the major intracellular degradation process by which cytoplasmic materials are packaged into autophagosomes and delivered to lysosomes for degradation. Binds phosphatidylinositol 3-phosphate (PtdIns3P). Activated by the STK11/AMPK signaling pathway upon starvation, WDR45 is involved in autophagosome assembly downstream of WIPI2, regulating the size of forming autophagosomes. Together with WIPI1, promotes ATG2 (ATG2A or ATG2B)-mediated lipid transfer by enhancing ATG2-association with phosphatidylinositol 3-monophosphate (PI3P)-containing membranes. Probably recruited to membranes through its PtdIns3P activity. This is WD repeat domain phosphoinositide-interacting protein 4 (WDR45) from Homo sapiens (Human).